A 163-amino-acid chain; its full sequence is uncharacterized protein (163 aa).

Over residues 1–10 (MGVPRAREGR) the composition is skewed to basic and acidic residues. The tract at residues 1–163 (MGVPRAREGR…WSFTPLRWGS (163 aa)) is disordered.

This is an uncharacterized protein from Homo sapiens (Human).